The sequence spans 362 residues: tRNA N6-adenosine threonylcarbamoyltransferase (362 aa).

The Fe cation site is built by H116 and H120. Residues 138–142, D171, G184, and N284 each bind substrate; that span reads LVSGG. Position 312 (D312) interacts with Fe cation.

The protein belongs to the KAE1 / TsaD family. The cofactor is Fe(2+).

It localises to the cytoplasm. It catalyses the reaction L-threonylcarbamoyladenylate + adenosine(37) in tRNA = N(6)-L-threonylcarbamoyladenosine(37) in tRNA + AMP + H(+). In terms of biological role, required for the formation of a threonylcarbamoyl group on adenosine at position 37 (t(6)A37) in tRNAs that read codons beginning with adenine. Is involved in the transfer of the threonylcarbamoyl moiety of threonylcarbamoyl-AMP (TC-AMP) to the N6 group of A37, together with TsaE and TsaB. TsaD likely plays a direct catalytic role in this reaction. The sequence is that of tRNA N6-adenosine threonylcarbamoyltransferase from Chelativorans sp. (strain BNC1).